The chain runs to 261 residues: Src-like-adapter 2 (261 aa).

Residues 1-10 are compositionally biased toward basic residues; that stretch reads MGSLPSRRKS. A disordered region spans residues 1–31; it reads MGSLPSRRKSLPSPSLSSSVQGQGPVTMEAE. G2 carries the N-myristoyl glycine lipid modification. The SH3 domain maps to 32–92; that stretch reads RSKATAVALG…PSVHVAKVSH (61 aa). Residues 94–191 enclose the SH2 domain; it reads WLYEGLSREK…DICCLLKEPC (98 aa). The tract at residues 195–261 is SLA C-terminal; sequence RAGPLPGKDI…NDEAVSLDDA (67 aa).

In terms of assembly, interacts (via SH2 domain) with ZAP70 (phosphorylated) and CD3Z (phosphorylated). Interacts (via SH2 domain) with CSF1R (phosphorylated). Interacts (via its C-terminal domain) with CBL (phosphorylated). Post-translationally, phosphorylated by CSF1R. Predominantly expressed in immune system, with highest levels in peripheral blood leukocytes. Expressed in spleen, thymus and lymph nodes. Expressed in T-cells as well as in monocytes, and at low level in B-cells. Also detected in placenta, prostate, skin, retina and colon.

The protein resides in the cytoplasm. It localises to the cell membrane. Its subcellular location is the cytoplasmic vesicle. Its function is as follows. Adapter protein, which negatively regulates T-cell receptor (TCR) signaling. Inhibits T-cell antigen-receptor induced activation of nuclear factor of activated T-cells. May act by linking signaling proteins such as ZAP70 with CBL, leading to a CBL dependent degradation of signaling proteins. The protein is Src-like-adapter 2 (SLA2) of Homo sapiens (Human).